Consider the following 76-residue polypeptide: Large ribosomal subunit protein uL29 (76 aa).

The protein belongs to the universal ribosomal protein uL29 family.

The chain is Large ribosomal subunit protein uL29 from Corynebacterium kroppenstedtii (strain DSM 44385 / JCM 11950 / CIP 105744 / CCUG 35717).